We begin with the raw amino-acid sequence, 595 residues long: uncharacterized protein (595 aa).

The disordered stretch occupies residues 1–21 (MSSQLKSTWAPVPSTKPSQPC). 11 WD repeats span residues 56–95 (EHTAPTTVARFSPSGYYVASGDNQGNVRIWDCAGEDKILK), 100–143 (AISG…GEIF), 144–184 (GHSS…FNRS), 187–226 (VHSKFVYDVRYSPNDERFASAGADGKVYVFDGKTGDQVYE), 229–268 (AHKGSIFSISWSPDSSQFVTSSAGYSCKIWDANTGSLIRE), 313–352 (GHQRSITAATLSPDATHFYTASYDGTVLSWDIGKQKAFPL), 356–393 (SHTNQVMQMIMADDHVITIGMDDTLRVIDIKQGCFAKD), 433–472 (KTIYQPSAVASHPLKSEFCVGGEDCCVYIHTLEKGELCEV), 477–516 (DSTAPITCLAYSPDGKYLACGDASGKVVLYDANSREVITS), 520–559 (FHTGRILGMSWNAKSTHLATASLDTNIHIYSVERPMKYIA), and 564–594 (HSLGATQVEWVSENELLSTGSDAAIKVWSVT).

Belongs to the WD repeat AIP1 family.

This is an uncharacterized protein from Schizosaccharomyces pombe (strain 972 / ATCC 24843) (Fission yeast).